The primary structure comprises 138 residues: Gonadotropin subunit beta-2 (138 aa).

A signal peptide spans 1–21 (MPASSYFLLFFFMNFFSPAQS). 6 cysteine pairs are disulfide-bonded: C27–C75, C41–C90, C44–C128, C52–C106, C56–C108, and C111–C118. N-linked (GlcNAc...) asparagine glycosylation is present at N31.

The protein belongs to the glycoprotein hormones subunit beta family. In terms of assembly, heterodimer of an alpha and a beta chain.

It is found in the secreted. Functionally, involved in gametogenesis and steroidogenesis. In Clarias gariepinus (North African catfish), this protein is Gonadotropin subunit beta-2 (cgbb).